The chain runs to 493 residues: Adenylyltransferase and sulfurtransferase uba4 (493 aa).

ATP-binding positions include Gly99, Asp120, 127–131, Lys144, and 188–189; these read SNLHR and DN. Zn(2+) contacts are provided by Cys237 and Cys240. Cys254 (glycyl thioester intermediate; for adenylyltransferase activity) is an active-site residue. The Zn(2+) site is built by Cys316 and Cys319. The Rhodanese domain occupies 376–491; the sequence is INKEPTIIDV…WREQIDPDWP (116 aa). Cys446 serves as the catalytic Cysteine persulfide intermediate; for sulfurtransferase activity.

The protein in the N-terminal section; belongs to the HesA/MoeB/ThiF family. UBA4 subfamily. Zn(2+) serves as cofactor.

Its subcellular location is the cytoplasm. The protein localises to the cytosol. The enzyme catalyses [molybdopterin-synthase sulfur-carrier protein]-C-terminal Gly-Gly + ATP + H(+) = [molybdopterin-synthase sulfur-carrier protein]-C-terminal Gly-Gly-AMP + diphosphate. The catalysed reaction is [molybdopterin-synthase sulfur-carrier protein]-C-terminal Gly-Gly-AMP + S-sulfanyl-L-cysteinyl-[cysteine desulfurase] + AH2 = [molybdopterin-synthase sulfur-carrier protein]-C-terminal-Gly-aminoethanethioate + L-cysteinyl-[cysteine desulfurase] + A + AMP + 2 H(+). Its pathway is tRNA modification; 5-methoxycarbonylmethyl-2-thiouridine-tRNA biosynthesis. It functions in the pathway cofactor biosynthesis; molybdopterin biosynthesis. Plays a central role in 2-thiolation of mcm(5)S(2)U at tRNA wobble positions of cytosolic tRNA(Lys), tRNA(Glu) and tRNA(Gln). Also essential during biosynthesis of the molybdenum cofactor. Acts by mediating the C-terminal thiocarboxylation of sulfur carriers urm1 and mocs2a. Its N-terminus first activates urm1 and mocs2a as acyl-adenylates (-COAMP), then the persulfide sulfur on the catalytic cysteine is transferred to urm1 and mocs2a to form thiocarboxylation (-COSH) of their C-terminus. The reaction probably involves hydrogen sulfide that is generated from the persulfide intermediate and that acts as a nucleophile towards urm1 and mocs2a. Subsequently, a transient disulfide bond is formed. Does not use thiosulfate as sulfur donor; nfs1 probably acting as a sulfur donor for thiocarboxylation reactions. The polypeptide is Adenylyltransferase and sulfurtransferase uba4 (Aspergillus fumigatus (strain CBS 144.89 / FGSC A1163 / CEA10) (Neosartorya fumigata)).